Consider the following 415-residue polypeptide: Serine hydroxymethyltransferase (415 aa).

(6S)-5,6,7,8-tetrahydrofolate is bound by residues leucine 117 and 121 to 123; that span reads GHL. Lysine 226 carries the post-translational modification N6-(pyridoxal phosphate)lysine. Position 241 (glutamate 241) interacts with (6S)-5,6,7,8-tetrahydrofolate.

The protein belongs to the SHMT family. In terms of assembly, homodimer. Pyridoxal 5'-phosphate serves as cofactor.

Its subcellular location is the cytoplasm. The catalysed reaction is (6R)-5,10-methylene-5,6,7,8-tetrahydrofolate + glycine + H2O = (6S)-5,6,7,8-tetrahydrofolate + L-serine. It functions in the pathway one-carbon metabolism; tetrahydrofolate interconversion. It participates in amino-acid biosynthesis; glycine biosynthesis; glycine from L-serine: step 1/1. Catalyzes the reversible interconversion of serine and glycine with tetrahydrofolate (THF) serving as the one-carbon carrier. This reaction serves as the major source of one-carbon groups required for the biosynthesis of purines, thymidylate, methionine, and other important biomolecules. Also exhibits THF-independent aldolase activity toward beta-hydroxyamino acids, producing glycine and aldehydes, via a retro-aldol mechanism. The sequence is that of Serine hydroxymethyltransferase from Bacillus licheniformis (strain ATCC 14580 / DSM 13 / JCM 2505 / CCUG 7422 / NBRC 12200 / NCIMB 9375 / NCTC 10341 / NRRL NRS-1264 / Gibson 46).